The sequence spans 398 residues: MAKVMIVGAGGVGSVVAHKCAALEDFTDILLASRTVAKCDQIAAHIGSPKVKTAALDAFQVSDTVKLLQDFGADLLINVALPYQDLVLMDACLEAGVDYLDTANYEPPDVAKFEYSWQWAYQDKFKDAGLMALLGCGFDPGVTGVFTAYALKHHFDEIHYLDIVDCNAGNHGQAFATNFNPEINIREITQKGRYHEDGVWQEIDPLSVHRDINYPHIGDRPSYLLYHEELESLVKNIPTLKRARFWMTFSEAYINHLRVLEAVGMTRIDEVEYQGQKIVPLQFLKAVLPEPASLAENYSGQTSIGCYIKGVKDGQAKTYYIYNNCDHAVCFAEVGSQAISYTTGVPAALGGLMMVQGKWKQAGVFNVEEMDPDPFLAKLGEMGLPWHEVVNGPFPFDD.

Belongs to the saccharopine dehydrogenase family.

The enzyme catalyses N(1)-[(S)-3-amino-3-carboxypropyl]agmatine + NADP(+) + H2O = L-aspartate 4-semialdehyde + agmatine + NADPH + H(+). It participates in amine and polyamine biosynthesis; spermidine biosynthesis. Dehydrogenase involved in the biosynthesis of spermidine via the carboxyaminopropylagmatine (CAPA) pathway. Catalyzes the reductive condensation of agmatine and L-aspartate-beta-semialdehyde (ASA) into CAPA. Shows activity toward putrescine and 1,3-diaminopropane, but the catalytic efficiency is three to four orders of magnitude lower than that for agmatine. Cannot use cadaverine or spermidine. The polypeptide is Carboxyaminopropylagmatine dehydrogenase (Synechocystis sp. (strain ATCC 27184 / PCC 6803 / Kazusa)).